A 473-amino-acid polypeptide reads, in one-letter code: Siroheme synthase (473 aa).

Residues 1 to 206 are precorrin-2 dehydrogenase /sirohydrochlorin ferrochelatase; that stretch reads MDYLPIFMKI…GNTGEAEALL (206 aa). Residues 22 to 23 and 43 to 44 contribute to the NAD(+) site; these read TV and PK. The segment at 223-473 is uroporphyrinogen-III C-methyltransferase; sequence GEVYIIGAGP…KSLLDDRVPA (251 aa). Residue Pro232 participates in S-adenosyl-L-methionine binding. The Proton acceptor role is filled by Asp255. Lys277 (proton donor) is an active-site residue. S-adenosyl-L-methionine contacts are provided by residues 308–310, Ile313, 338–339, Met390, and Gly419; these read GGD and TA.

It in the N-terminal section; belongs to the precorrin-2 dehydrogenase / sirohydrochlorin ferrochelatase family. This sequence in the C-terminal section; belongs to the precorrin methyltransferase family.

It catalyses the reaction uroporphyrinogen III + 2 S-adenosyl-L-methionine = precorrin-2 + 2 S-adenosyl-L-homocysteine + H(+). The catalysed reaction is precorrin-2 + NAD(+) = sirohydrochlorin + NADH + 2 H(+). The enzyme catalyses siroheme + 2 H(+) = sirohydrochlorin + Fe(2+). It functions in the pathway cofactor biosynthesis; adenosylcobalamin biosynthesis; precorrin-2 from uroporphyrinogen III: step 1/1. It participates in cofactor biosynthesis; adenosylcobalamin biosynthesis; sirohydrochlorin from precorrin-2: step 1/1. Its pathway is porphyrin-containing compound metabolism; siroheme biosynthesis; precorrin-2 from uroporphyrinogen III: step 1/1. The protein operates within porphyrin-containing compound metabolism; siroheme biosynthesis; siroheme from sirohydrochlorin: step 1/1. It functions in the pathway porphyrin-containing compound metabolism; siroheme biosynthesis; sirohydrochlorin from precorrin-2: step 1/1. In terms of biological role, multifunctional enzyme that catalyzes the SAM-dependent methylations of uroporphyrinogen III at position C-2 and C-7 to form precorrin-2 via precorrin-1. Then it catalyzes the NAD-dependent ring dehydrogenation of precorrin-2 to yield sirohydrochlorin. Finally, it catalyzes the ferrochelation of sirohydrochlorin to yield siroheme. This is Siroheme synthase from Hydrogenovibrio crunogenus (strain DSM 25203 / XCL-2) (Thiomicrospira crunogena).